Consider the following 263-residue polypeptide: MTFPNINPIIFSVGPLAVSWYSLSYVVGILFGWFYASKIIEKFPTQITKKNLEEFVTYAIIGIIVGGRLGYILLYNPYKYFSNPIEILKTYEGGMSFHGGAIGVIIAAYIFCKRHKLNFLSLTDIIAPVVPIGLFFGRIANFINGELYGRVTNSSIGVIFPDSDLNLRHPSQLYEAFFEGLVLFCILAYAVFKRNTIKKQGLNSGLFLMFYSLFRIIIEIFREPDVQIGFIFDSLTMGQILSMPLLLLGIYLIIKTECRSITK.

Helical transmembrane passes span 16 to 36 (LAVS…WFYA), 55 to 75 (FVTY…ILLY), 92 to 112 (EGGM…YIFC), and 117 to 137 (LNFL…LFFG). Arginine 138 lines the a 1,2-diacyl-sn-glycero-3-phospho-(1'-sn-glycerol) pocket. The next 3 helical transmembrane spans lie at 172–192 (QLYE…YAVF), 201–221 (GLNS…IEIF), and 234–254 (SLTM…YLII).

The protein belongs to the Lgt family.

The protein resides in the cell inner membrane. The catalysed reaction is L-cysteinyl-[prolipoprotein] + a 1,2-diacyl-sn-glycero-3-phospho-(1'-sn-glycerol) = an S-1,2-diacyl-sn-glyceryl-L-cysteinyl-[prolipoprotein] + sn-glycerol 1-phosphate + H(+). Its pathway is protein modification; lipoprotein biosynthesis (diacylglyceryl transfer). In terms of biological role, catalyzes the transfer of the diacylglyceryl group from phosphatidylglycerol to the sulfhydryl group of the N-terminal cysteine of a prolipoprotein, the first step in the formation of mature lipoproteins. The chain is Phosphatidylglycerol--prolipoprotein diacylglyceryl transferase from Rickettsia bellii (strain OSU 85-389).